Consider the following 225-residue polypeptide: Phosphoserine phosphatase (225 aa).

Position 1 is an N-acetylmethionine (Met1). The Nucleophile role is filled by Asp20. Mg(2+)-binding residues include Asp20 and Asp22. Asp20–Asp22 lines the L-serine pocket. Asp22 (proton donor) is an active-site residue. Met52 provides a ligand contact to O-phospho-L-serine. Phosphate is bound at residue Gly53. L-serine-binding positions include Ser109–Gly111 and Lys158. O-phospho-L-serine is bound by residues Ser109–Gly111 and Lys158. Position 179 (Asp179) interacts with Mg(2+). Thr182 provides a ligand contact to O-phospho-L-serine. Residue Thr182 coordinates phosphate.

The protein belongs to the HAD-like hydrolase superfamily. SerB family. Homodimer. Requires Mg(2+) as cofactor.

It localises to the cytoplasm. The protein resides in the cytosol. It carries out the reaction O-phospho-L-serine + H2O = L-serine + phosphate. The enzyme catalyses O-phospho-D-serine + H2O = D-serine + phosphate. Its pathway is amino-acid biosynthesis; L-serine biosynthesis; L-serine from 3-phospho-D-glycerate: step 3/3. Functionally, catalyzes the last irreversible step in the biosynthesis of L-serine from carbohydrates, the dephosphorylation of O-phospho-L-serine to L-serine. L-serine can then be used in protein synthesis, to produce other amino acids, in nucleotide metabolism or in glutathione synthesis, or can be racemized to D-serine, a neuromodulator. May also act on O-phospho-D-serine. The protein is Phosphoserine phosphatase of Mus musculus (Mouse).